We begin with the raw amino-acid sequence, 152 residues long: Histone deacetylase complex subunit SAP18 (152 aa).

The segment at 1-38 is disordered; sequence MAEAARRQGGGRPLPPPPRGVNQQPPRPKPEPVDREKT. Basic and acidic residues predominate over residues 28-38; sequence PKPEPVDREKT.

The protein belongs to the SAP18 family. Interacts with SIN3, ERF3, ERF4 and HDA19. In terms of tissue distribution, ubiquitous, with low level in flowers.

Links the histone deacetylase complex to transcriptional repressors bound to chromatin. Involved in the tethering of the SIN3 complex to core histone proteins. The polypeptide is Histone deacetylase complex subunit SAP18 (Arabidopsis thaliana (Mouse-ear cress)).